The chain runs to 214 residues: Alpha-S1-casein (214 aa).

The N-terminal stretch at Met1–Ala15 is a signal peptide. The disordered stretch occupies residues Ile59–Ala91. A phosphoserine mark is found at Ser61, Ser63, Ser79, Ser80, Ser81, Ser82, Ser83, Ser90, and Ser130.

It belongs to the alpha-casein family. As to expression, mammary gland specific. Secreted in milk.

The protein resides in the secreted. Functionally, important role in the capacity of milk to transport calcium phosphate. This is Alpha-S1-casein (CSN1S1) from Capra hircus (Goat).